The chain runs to 389 residues: Acetate kinase (389 aa).

N9 is a binding site for Mg(2+). K16 is a binding site for ATP. Residue R77 participates in substrate binding. D134 functions as the Proton donor/acceptor in the catalytic mechanism. Residues 194 to 198, 268 to 270, and 316 to 320 contribute to the ATP site; these read HLGNG, DFR, and GVGEN. Mg(2+) is bound at residue E370.

It belongs to the acetokinase family. As to quaternary structure, homodimer. It depends on Mg(2+) as a cofactor. Mn(2+) is required as a cofactor.

It is found in the cytoplasm. It carries out the reaction acetate + ATP = acetyl phosphate + ADP. Its pathway is metabolic intermediate biosynthesis; acetyl-CoA biosynthesis; acetyl-CoA from acetate: step 1/2. Functionally, catalyzes the formation of acetyl phosphate from acetate and ATP. Can also catalyze the reverse reaction. The chain is Acetate kinase from Mycolicibacterium vanbaalenii (strain DSM 7251 / JCM 13017 / BCRC 16820 / KCTC 9966 / NRRL B-24157 / PYR-1) (Mycobacterium vanbaalenii).